The chain runs to 378 residues: AT-hook motif nuclear-localized protein 5 (378 aa).

Disordered stretches follow at residues 30–70 (QVAS…AEHR), 88–160 (VQPT…GRKQ), and 302–378 (NNNK…LTRG). The span at 104–113 (VKKKRGRPRK) shows a compositional bias: basic residues. Residues 105-113 (KKKRGRPRK) carry the Bipartite nuclear localization signal motif. 2 consecutive DNA-binding regions (a.T hook) follow at residues 105-117 (KKKR…YVPD) and 147-159 (KRAR…TGRK). The PPC domain occupies 171–314 (TSAGLAFAPH…KTIKQEIKPK (144 aa)). Composition is skewed to polar residues over residues 316-327 (EPTNSEMETTPG) and 335-345 (STGQHTPQNFP).

In terms of assembly, interacts with AHL29.

The protein localises to the nucleus. Transcription factor that specifically binds AT-rich DNA sequences related to the nuclear matrix attachment regions (MARs). This is AT-hook motif nuclear-localized protein 5 from Arabidopsis thaliana (Mouse-ear cress).